Reading from the N-terminus, the 391-residue chain is Chaperone protein DnaJ (391 aa).

Positions 4-68 (DFYDVLGVSR…ETRQQYDQLG (65 aa)) constitute a J domain. Over residues 53–79 (DVLTDEETRQQYDQLGHERFEEAEKRG) the composition is skewed to basic and acidic residues. Disordered regions lie at residues 53 to 94 (DVLT…MGGA) and 117 to 136 (FFGGAGGGGGRGRSGPEQGR). 2 stretches are compositionally biased toward gly residues: residues 81 to 94 (TGNGGGGAGGMGGA) and 119 to 129 (GGAGGGGGRGR). The segment at 152-234 (GVSKQVTVRR…CGGQGQTRER (83 aa)) adopts a CR-type zinc-finger fold. Residues cysteine 165, cysteine 168, cysteine 182, cysteine 185, cysteine 208, cysteine 211, cysteine 222, and cysteine 225 each contribute to the Zn(2+) site. 4 CXXCXGXG motif repeats span residues 165–172 (CADCGGSG), 182–189 (CPQCDGQG), 208–215 (CSRCGGEG), and 222–229 (CSTCGGQG).

Belongs to the DnaJ family. In terms of assembly, homodimer. It depends on Zn(2+) as a cofactor.

Its subcellular location is the cytoplasm. Participates actively in the response to hyperosmotic and heat shock by preventing the aggregation of stress-denatured proteins and by disaggregating proteins, also in an autonomous, DnaK-independent fashion. Unfolded proteins bind initially to DnaJ; upon interaction with the DnaJ-bound protein, DnaK hydrolyzes its bound ATP, resulting in the formation of a stable complex. GrpE releases ADP from DnaK; ATP binding to DnaK triggers the release of the substrate protein, thus completing the reaction cycle. Several rounds of ATP-dependent interactions between DnaJ, DnaK and GrpE are required for fully efficient folding. Also involved, together with DnaK and GrpE, in the DNA replication of plasmids through activation of initiation proteins. The chain is Chaperone protein DnaJ from Halobacterium salinarum (strain ATCC 29341 / DSM 671 / R1).